The sequence spans 113 residues: Class I hydrophobin fvh1 (113 aa).

The first 20 residues, 1–20 (MVSFRAFTVAASLFATLAAA), serve as a signal peptide directing secretion. 4 disulfides stabilise this stretch: Cys-34-Cys-94, Cys-41-Cys-88, Cys-42-Cys-75, and Cys-95-Cys-108. N-linked (GlcNAc...) asparagine glycosylation occurs at Asn-35. The N-linked (GlcNAc...) asparagine glycan is linked to Asn-97.

Belongs to the fungal hydrophobin family. As to quaternary structure, self-assembles to form functional amyloid fibrils called rodlets. Self-assembly into fibrillar rodlets occurs spontaneously at hydrophobic:hydrophilic interfaces and the rodlets further associate laterally to form amphipathic monolayers.

Its subcellular location is the secreted. It localises to the cell wall. In terms of biological role, aerial growth, conidiation, and dispersal of filamentous fungi in the environment rely upon a capability of their secreting small amphipathic proteins called hydrophobins (HPBs) with low sequence identity. Class I can self-assemble into an outermost layer of rodlet bundles on aerial cell surfaces, conferring cellular hydrophobicity that supports fungal growth, development and dispersal; whereas Class II form highly ordered films at water-air interfaces through intermolecular interactions but contribute nothing to the rodlet structure. Fvh1 is a class I hydrophobin involved in fruiting body initiation. The polypeptide is Class I hydrophobin fvh1 (Flammulina velutipes (Agaricus velutipes)).